The following is a 61-amino-acid chain: Bowman-Birk type proteinase inhibitor B5 (61 aa).

6 disulfide bridges follow: Cys-5-Cys-60, Cys-6-Cys-22, Cys-9-Cys-56, Cys-12-Cys-20, Cys-29-Cys-36, and Cys-33-Cys-48.

The protein belongs to the Bowman-Birk serine protease inhibitor family. Expressed in bulb (at protein level).

Functionally, serine protease inhibitor. Inhibits trypsin (Ki = 41 nM) and weakly inhibits chymotrypsin (Ki = 410 nM). Does not inhibit bacterial subtilisin. The polypeptide is Bowman-Birk type proteinase inhibitor B5 (Hyacinthus orientalis (Common hyacinth)).